Consider the following 873-residue polypeptide: Zinc fingers and homeoboxes protein 1 (873 aa).

The disordered stretch occupies residues 1–63; sequence MASRRKSTTP…ESVDSDNQQN (63 aa). Over residues 18–30 the composition is skewed to acidic residues; that stretch reads QDPDLELISDLDE. Thr36 is subject to Phosphothreonine. 3 positions are modified to phosphoserine: Ser45, Ser47, and Ser48. 2 consecutive C2H2-type zinc fingers follow at residues 70–93 and 102–125; these read YECK…DSEH and YVCV…LKYH. Lys159 is covalently cross-linked (Glycyl lysine isopeptide (Lys-Gly) (interchain with G-Cter in SUMO2)). Ser202 carries the phosphoserine modification. The segment at 202–236 is disordered; that stretch reads SVEDVPEEKENEIKPDREEIVENPSSSASESNTST. A compositionally biased stretch (basic and acidic residues) spans 212-221; sequence NEIKPDREEI. A compositionally biased stretch (low complexity) spans 223–236; that stretch reads ENPSSSASESNTST. The tract at residues 272–432 is required for dimerization; that stretch reads NSNLIPKVLI…QNNVQKSQVP (161 aa). The tract at residues 272-564 is required for interaction with NFYA; sequence NSNLIPKVLI…AQPKQSWNPF (293 aa). The homeobox 1 DNA-binding region spans 284–346; it reads NSIPTYNAAL…LKHGVSWTPE (63 aa). Residues Lys441, Lys454, Lys485, and Lys629 each participate in a glycyl lysine isopeptide (Lys-Gly) (interchain with G-Cter in SUMO2) cross-link. 2 consecutive DNA-binding regions (homeobox) follow at residues 464-526 and 569-630; these read SFGI…KSNQ and PQKF…EEKM. 2 disordered regions span residues 626 to 667 and 732 to 769; these read KEEK…ICKK and SSMN…INNW. At Ser648 the chain carries Phosphoserine. A DNA-binding region (homeobox 4) is located at residues 660–722; that stretch reads STGKICKKTP…YAWKNGNLKW (63 aa). Residues 734-768 form a required for nuclear localization region; it reads MNGLSSLRKRGRGRPKGRGRGRPRGRPRGSKRINN. Residues 740 to 764 are compositionally biased toward basic residues; that stretch reads LRKRGRGRPKGRGRGRPRGRPRGSK. The residue at position 774 (Ser774) is a Phosphoserine. The segment at residues 777-832 is a DNA-binding region (homeobox 5); it reads KFKTGTAILKDYYLKHKFLNEQDLDELVNKSHMGYEQVREWFAERQRRSELGIELF. Positions 829-873 are disordered; the sequence is IELFEENEEEDEVIDDQEEDEEETDDSDTWEPPRHVKRKLSKSDD. The segment covering 831-857 has biased composition (acidic residues); the sequence is LFEENEEEDEVIDDQEEDEEETDDSDT. The segment at 831 to 873 is required for repressor activity; sequence LFEENEEEDEVIDDQEEDEEETDDSDTWEPPRHVKRKLSKSDD. Over residues 863-873 the composition is skewed to basic residues; the sequence is HVKRKLSKSDD.

This sequence belongs to the ZHX family. Forms homodimers. Also forms heterodimers with ZHX3 which is a prerequisite for repressor activity and with ZHX2. Interacts with NFYA. Interacts with ATF7IP.

The protein localises to the nucleus. Acts as a transcriptional repressor. The sequence is that of Zinc fingers and homeoboxes protein 1 (ZHX1) from Gorilla gorilla gorilla (Western lowland gorilla).